The sequence spans 784 residues: Receptor-like protein 38 (784 aa).

The signal sequence occupies residues 1–30 (MIRSQSYCFLGITITIYFFFCLLPLPNTFA). Residues 31–752 (SPPTQSLCRH…SELEEPVLNW (722 aa)) are Extracellular-facing. LRR repeat units follow at residues 109–133 (LQHL…IENL), 134–157 (SHLT…IGNL), 158–180 (NQLE…SFAN), 182–204 (TKLS…LSNL), and 205–227 (TSLA…DLSG). A glycan (N-linked (GlcNAc...) asparagine) is linked at Asn-132. Asn-180, Asn-193, and Asn-203 each carry an N-linked (GlcNAc...) asparagine glycan. The stretch at 228–251 (LHNLEQIFGNENSFVGLFPASLLK) is one LRR 6; degenerate repeat. LRR repeat units follow at residues 252 to 276 (ISSL…NTSS), 278 to 301 (SRLT…LSKL), 302 to 324 (VNLE…SISK), 326 to 349 (VNLT…IWKP), 351 to 373 (NLQS…EVVN), 374 to 400 (GAKL…NFRF), 402 to 422 (FFLD…LKNS), 423 to 446 (TDFN…CMDS), 447 to 470 (TMLR…LMNC), and 472 to 496 (DMEF…SRKS). A glycan (N-linked (GlcNAc...) asparagine) is linked at Asn-273. An N-linked (GlcNAc...) asparagine glycan is attached at Asn-327. N-linked (GlcNAc...) asparagine glycosylation is found at Asn-421 and Asn-432. Residues 497 to 518 (LMVLVLRSNAFYGPVYNSTTYL) form an LRR 17; degenerate repeat. 3 N-linked (GlcNAc...) asparagine glycosylation sites follow: Asn-513, Asn-544, and Asn-562. The LRR 18 repeat unit spans residues 520-544 (FPRLSIIDISNNDFVGSLPQDYFAN). 4 LRR repeats span residues 608–632 (FRGF…IGLL), 633–656 (SELL…LANI), 657–680 (TNLE…LGNL), and 682–705 (FLSN…QFGT). Asn-639, Asn-655, Asn-668, Asn-679, Asn-687, and Asn-707 each carry an N-linked (GlcNAc...) asparagine glycan. The chain crosses the membrane as a helical span at residues 753 to 773 (IAAAIAFGPGVFCGFVIGHIF). Topologically, residues 774-784 (TSYKHLWFIAR) are cytoplasmic.

The protein belongs to the RLP family.

Its subcellular location is the cell membrane. The sequence is that of Receptor-like protein 38 from Arabidopsis thaliana (Mouse-ear cress).